A 465-amino-acid chain; its full sequence is MMSSPIPHQQTIAAVATAVAPGQGGIAVVRLSGPAAEVVGRSVVSIPGQQLWVSHRVLYGHVMDESGKERIDEVLVLLMKGPRSFTGEDVVEIHCHGGLMAVQRVLERVLAQPHVRRALPGEFSQRAVLNGRLDLTQAEAISELVAARSRRAAQLAMTGVDGGIQRRITSLRERLLDQLSELEARVDFEEDLPPLDAAELLLELQCVRRELEQLVEDAKRGDVLRQGLQVALVGRPNVGKSSLLNRLSRRERAIVTDLPGTTRDVLESEIVLEGVPITLVDTAGIRATKDALEQLGIDRSHQALAAADVAVLVFDLSLGWTADDAALLAQIPDDLPRLLVGNKADLQPASMTASLSNEVDGKTVDVMLSALTGQGEEALIEAVLKTCGASEAQGLVVALNQRQQDLAATAAIALARTQEAAAQKLPWDFWTIDLRQAISSLGEITGEEITEAVLDRIFSRFCIGK.

Arg30, Glu92, and Arg132 together coordinate (6S)-5-formyl-5,6,7,8-tetrahydrofolate. The TrmE-type G domain maps to Gly227 to Gly388. Asn237 is a binding site for K(+). GTP contacts are provided by residues Asn237–Ser242, Thr256–Thr262, Asp281–Gly284, and Asn342–Asp345. Position 241 (Ser241) interacts with Mg(2+). Thr256, Leu258, and Thr261 together coordinate K(+). Mg(2+) is bound at residue Thr262. Lys465 contributes to the (6S)-5-formyl-5,6,7,8-tetrahydrofolate binding site.

Belongs to the TRAFAC class TrmE-Era-EngA-EngB-Septin-like GTPase superfamily. TrmE GTPase family. As to quaternary structure, homodimer. Heterotetramer of two MnmE and two MnmG subunits. Requires K(+) as cofactor.

Its subcellular location is the cytoplasm. Exhibits a very high intrinsic GTPase hydrolysis rate. Involved in the addition of a carboxymethylaminomethyl (cmnm) group at the wobble position (U34) of certain tRNAs, forming tRNA-cmnm(5)s(2)U34. The polypeptide is tRNA modification GTPase MnmE (Prochlorococcus marinus (strain MIT 9303)).